The sequence spans 486 residues: ATP synthase subunit beta 2 (486 aa).

Position 166–173 (Gly166–Thr173) interacts with ATP.

Belongs to the ATPase alpha/beta chains family. In terms of assembly, F-type ATPases have 2 components, CF(1) - the catalytic core - and CF(0) - the membrane proton channel. CF(1) has five subunits: alpha(3), beta(3), gamma(1), delta(1), epsilon(1). CF(0) has three main subunits: a(1), b(2) and c(9-12). The alpha and beta chains form an alternating ring which encloses part of the gamma chain. CF(1) is attached to CF(0) by a central stalk formed by the gamma and epsilon chains, while a peripheral stalk is formed by the delta and b chains.

Its subcellular location is the cell inner membrane. It catalyses the reaction ATP + H2O + 4 H(+)(in) = ADP + phosphate + 5 H(+)(out). Produces ATP from ADP in the presence of a proton gradient across the membrane. The catalytic sites are hosted primarily by the beta subunits. This is ATP synthase subunit beta 2 from Gluconobacter oxydans (strain 621H) (Gluconobacter suboxydans).